Reading from the N-terminus, the 389-residue chain is Acetyl-CoA decarbonylase/synthase complex subunit delta (389 aa).

Belongs to the CdhD family. Heterodimer of delta and gamma chains. The ACDS complex is made up of alpha, epsilon, beta, gamma and delta chains with a probable stoichiometry of (alpha(2)epsilon(2))(4)-beta(8)-(gamma(1)delta(1))(8).

Functionally, part of a complex that catalyzes the reversible cleavage of acetyl-CoA, allowing autotrophic growth from CO(2). Probably maintains the overall quaternary structure of the ACDS complex. This chain is Acetyl-CoA decarbonylase/synthase complex subunit delta, found in Methanothermobacter thermautotrophicus (strain ATCC 29096 / DSM 1053 / JCM 10044 / NBRC 100330 / Delta H) (Methanobacterium thermoautotrophicum).